We begin with the raw amino-acid sequence, 484 residues long: Glutamate--tRNA ligase (484 aa).

The short motif at 11–21 is the 'HIGH' region element; sequence PSPTGLLHIGN. Residues 255-259 carry the 'KMSKS' region motif; that stretch reads KLSKR. Lys-258 provides a ligand contact to ATP.

It belongs to the class-I aminoacyl-tRNA synthetase family. Glutamate--tRNA ligase type 1 subfamily. In terms of assembly, monomer.

It is found in the cytoplasm. The catalysed reaction is tRNA(Glu) + L-glutamate + ATP = L-glutamyl-tRNA(Glu) + AMP + diphosphate. Its function is as follows. Catalyzes the attachment of glutamate to tRNA(Glu) in a two-step reaction: glutamate is first activated by ATP to form Glu-AMP and then transferred to the acceptor end of tRNA(Glu). The sequence is that of Glutamate--tRNA ligase from Streptococcus agalactiae serotype Ia (strain ATCC 27591 / A909 / CDC SS700).